Reading from the N-terminus, the 129-residue chain is Lysozyme C (129 aa).

The region spanning 1-129 is the C-type lysozyme domain; the sequence is KVFSKCELAH…LSEYLASCNL (129 aa). Cystine bridges form between Cys6–Cys127, Cys30–Cys115, Cys65–Cys80, and Cys76–Cys94. Residues Glu35 and Asp53 contribute to the active site. 5 residues coordinate Ca(2+): Lys82, Asp85, Asn87, Asp90, and Asp91.

This sequence belongs to the glycosyl hydrolase 22 family. Monomer. Ca(2+) is required as a cofactor.

It carries out the reaction Hydrolysis of (1-&gt;4)-beta-linkages between N-acetylmuramic acid and N-acetyl-D-glucosamine residues in a peptidoglycan and between N-acetyl-D-glucosamine residues in chitodextrins.. In terms of biological role, lysozymes have primarily a bacteriolytic function; those in tissues and body fluids are associated with the monocyte-macrophage system and enhance the activity of immunoagents. This Equus asinus (Donkey) protein is Lysozyme C (LYZ).